Consider the following 61-residue polypeptide: Hepcidin (61 aa).

The tract at residues Leu-1–Glu-24 is disordered. Positions Leu-1–Phe-34 are excised as a propeptide. 4 cysteine pairs are disulfide-bonded: Cys-43–Cys-59, Cys-46–Cys-49, Cys-47–Xaa-55, and Cys-50–Cys-58.

It belongs to the hepcidin family.

It localises to the secreted. Functionally, seems to act as a signaling molecule involved in the maintenance of iron homeostasis. Seems to be required in conjunction with HFE to regulate both intestinal iron absorption and iron storage in macrophages. May also have antimicrobial activity. The polypeptide is Hepcidin (hamp) (Oncorhynchus mykiss (Rainbow trout)).